The primary structure comprises 447 residues: Growth/differentiation factor 7 (447 aa).

The first 19 residues, 1 to 19 (MDLSAAAALCLWLLSACRP), serve as a signal peptide directing secretion. The propeptide occupies 20–318 (RDGLEAAAVL…AVTAGRRRRR (299 aa)). N80 is a glycosylation site (N-linked (GlcNAc...) asparagine). The segment at 292–346 (LAAQPPPDPGTGTGSPRAVTAGRRRRRTALAGTRTAQGSGGGAGRGHGRRGRSRC) is disordered. Residues 337–346 (GHGRRGRSRC) show a composition bias toward basic residues. Cystine bridges form between C346-C412, C375-C444, and C379-C446.

It belongs to the TGF-beta family. Homodimer; disulfide-linked. In terms of tissue distribution, highly expressed in the primary aera of brain neocortex.

The protein resides in the secreted. In terms of biological role, may play an active role in the motor area of the primate neocortex. In Chlorocebus aethiops (Green monkey), this protein is Growth/differentiation factor 7 (GDF7).